The sequence spans 59 residues: Protein translocase subunit SecE (59 aa).

Residues 33-53 (GAGIALVGLLGFIIFAVMTFV) form a helical membrane-spanning segment.

Belongs to the SecE/SEC61-gamma family. In terms of assembly, component of the Sec protein translocase complex. Heterotrimer consisting of SecY (alpha), SecG (beta) and SecE (gamma) subunits. The heterotrimers can form oligomers, although 1 heterotrimer is thought to be able to translocate proteins. Interacts with the ribosome. May interact with SecDF, and other proteins may be involved.

The protein resides in the cell membrane. In terms of biological role, essential subunit of the Sec protein translocation channel SecYEG. Clamps together the 2 halves of SecY. May contact the channel plug during translocation. This chain is Protein translocase subunit SecE, found in Haloarcula marismortui (strain ATCC 43049 / DSM 3752 / JCM 8966 / VKM B-1809) (Halobacterium marismortui).